Reading from the N-terminus, the 165-residue chain is Transcription factor E (165 aa).

Positions 5 to 87 constitute an HTH TFE/IIEalpha-type domain; it reads NDPVVRGYLL…LWQLDLSDIE (83 aa).

It belongs to the TFE family. In terms of assembly, monomer. Interaction with RNA polymerase subunits RpoF and RpoE is necessary for Tfe stimulatory transcription activity. Able to interact with Tbp and RNA polymerase in the absence of DNA promoter. Interacts both with the preinitiation and elongation complexes.

Its function is as follows. Transcription factor that plays a role in the activation of archaeal genes transcribed by RNA polymerase. Facilitates transcription initiation by enhancing TATA-box recognition by TATA-box-binding protein (Tbp), and transcription factor B (Tfb) and RNA polymerase recruitment. Not absolutely required for transcription in vitro, but particularly important in cases where Tbp or Tfb function is not optimal. It dynamically alters the nucleic acid-binding properties of RNA polymerases by stabilizing the initiation complex and destabilizing elongation complexes. Seems to translocate with the RNA polymerase following initiation and acts by binding to the non template strand of the transcription bubble in elongation complexes. The sequence is that of Transcription factor E from Methanococcoides burtonii (strain DSM 6242 / NBRC 107633 / OCM 468 / ACE-M).